Reading from the N-terminus, the 332-residue chain is L-lactate dehydrogenase A chain (332 aa).

Residues 29–57 (GAVG…IEDK) and R99 each bind NAD(+). 3 residues coordinate substrate: R106, N138, and R169. An NAD(+)-binding site is contributed by N138. H193 serves as the catalytic Proton acceptor. Substrate is bound at residue T248.

It belongs to the LDH/MDH superfamily. LDH family. Homotetramer.

It is found in the cytoplasm. It catalyses the reaction (S)-lactate + NAD(+) = pyruvate + NADH + H(+). Its pathway is fermentation; pyruvate fermentation to lactate; (S)-lactate from pyruvate: step 1/1. Interconverts simultaneously and stereospecifically pyruvate and lactate with concomitant interconversion of NADH and NAD(+). This is L-lactate dehydrogenase A chain (LDHA) from Trachemys scripta elegans (Red-eared slider turtle).